We begin with the raw amino-acid sequence, 441 residues long: Putative transporter AmpG 1 (441 aa).

A run of 12 helical transmembrane segments spans residues 5–25 (SHLL…MITG), 42–62 (IGIL…APIF), 78–98 (LSWI…FSFL), 104–124 (LVLF…QDTI), 143–163 (GIYI…AIYL), 171–191 (EIYK…IVAA), 249–269 (SGND…LVLY), 297–317 (VGKF…GFIM), 325–345 (SIFL…FLEI), 352–372 (LLFI…TAYI), 390–410 (FLSS…GYMV), and 413–433 (FGWQ…LLIL).

This sequence belongs to the major facilitator superfamily.

It is found in the cell inner membrane. In Rickettsia felis (strain ATCC VR-1525 / URRWXCal2) (Rickettsia azadi), this protein is Putative transporter AmpG 1 (ampG1).